The chain runs to 139 residues: Maximins 4/H3 type 7 (139 aa).

Positions 1-18 (MNFKYIVAVSFLIASAYA) are cleaved as a signal peptide. The propeptide occupies 19–43 (RSVQNDEQSLSQRDVLEEESLREIR). Asparagine 70 bears the Asparagine amide mark. Positions 74 to 118 (TAEDHEVMKRLEAIMRDLDSLDYPEEASERETRGFNQDEIAKEKR) are excised as a propeptide. Isoleucine 138 carries the isoleucine amide modification.

Belongs to the bombinin family. Expressed by the skin glands.

It is found in the secreted. Its function is as follows. Maximin-4 shows antibacterial activity against both Gram-positive and Gram-negative bacteria. It also shows antimicrobial activity against the fungus C.albicans, but not against A.flavus nor P.uticale. It has little hemolytic activity. It does not possess a significant cytotoxicity against tumor cell lines. It does not possess a significant anti-HIV activity. Maximin-H3 shows antibacterial activity against both Gram-positive and Gram-negative bacteria. It also shows antimicrobial activity against the fungus C.albicans. Shows strong hemolytic activity. This is Maximins 4/H3 type 7 from Bombina maxima (Giant fire-bellied toad).